Here is a 43-residue protein sequence, read N- to C-terminus: Cytochrome b559 subunit beta (43 aa).

Residues 18–34 (WLAIHGLAIPTVFFFGA) form a helical membrane-spanning segment. Heme is bound at residue histidine 22.

The protein belongs to the PsbE/PsbF family. As to quaternary structure, heterodimer of an alpha subunit and a beta subunit. PSII is composed of 1 copy each of membrane proteins PsbA, PsbB, PsbC, PsbD, PsbE, PsbF, PsbH, PsbI, PsbJ, PsbK, PsbL, PsbM, PsbT, PsbY, PsbZ, Psb30/Ycf12, at least 3 peripheral proteins of the oxygen-evolving complex and a large number of cofactors. It forms dimeric complexes. Requires heme b as cofactor.

It localises to the plastid. Its subcellular location is the chloroplast thylakoid membrane. In terms of biological role, this b-type cytochrome is tightly associated with the reaction center of photosystem II (PSII). PSII is a light-driven water:plastoquinone oxidoreductase that uses light energy to abstract electrons from H(2)O, generating O(2) and a proton gradient subsequently used for ATP formation. It consists of a core antenna complex that captures photons, and an electron transfer chain that converts photonic excitation into a charge separation. The polypeptide is Cytochrome b559 subunit beta (Cyanidium caldarium (Red alga)).